Reading from the N-terminus, the 244-residue chain is tRNA (guanine-N(7)-)-methyltransferase (244 aa).

S-adenosyl-L-methionine is bound by residues Glu-75, Glu-100, Asp-127, and Asp-150. The active site involves Asp-150. Substrate contacts are provided by residues Lys-154, Asp-186, and 223–226; that span reads TRFE.

This sequence belongs to the class I-like SAM-binding methyltransferase superfamily. TrmB family.

The enzyme catalyses guanosine(46) in tRNA + S-adenosyl-L-methionine = N(7)-methylguanosine(46) in tRNA + S-adenosyl-L-homocysteine. Its pathway is tRNA modification; N(7)-methylguanine-tRNA biosynthesis. In terms of biological role, catalyzes the formation of N(7)-methylguanine at position 46 (m7G46) in tRNA. This is tRNA (guanine-N(7)-)-methyltransferase from Xylella fastidiosa (strain M23).